Consider the following 188-residue polypeptide: Small ribosomal subunit protein uS12m (188 aa).

Residues 1 to 63 (MSGGRWISNL…AAFRLPQSSG (63 aa)) constitute a mitochondrion transit peptide.

It belongs to the universal ribosomal protein uS12 family.

The protein localises to the mitochondrion. Its function is as follows. Protein S12 is involved in the translation initiation step. In Oenothera elata subsp. hookeri (Hooker's evening primrose), this protein is Small ribosomal subunit protein uS12m (RPS12).